A 65-amino-acid chain; its full sequence is MRIVYLLLPFILLLAQGAAGSSQALGRKSDCFRKSGFCAFLKCPSLTLISGKCSRFYLCCKRIWG.

The signal sequence occupies residues 1–19; it reads MRIVYLLLPFILLLAQGAA. Positions 20–25 are excised as a propeptide; it reads GSSQAL. Cystine bridges form between Cys31–Cys59, Cys38–Cys53, and Cys43–Cys60.

The protein belongs to the beta-defensin family. In terms of tissue distribution, strong expression in the bone marrow, lung, testis. Moderate expression in the bursa and intestine. Low expression in the cloaca, gall bladder, brain and pancreas. Expressed in the vagina, ovarian stroma and the theca and granulosa layers of the ovarian follicle.

It localises to the secreted. It is found in the cytoplasmic granule. Functionally, has bactericidal activity. Potent activity against E.coli ML-35, L.monocytogenes EGD and C.albicans. This chain is Gallinacin-1 (GAL1), found in Gallus gallus (Chicken).